The primary structure comprises 463 residues: uncharacterized protein (463 aa).

12 consecutive transmembrane segments (helical) span residues 21 to 40 (DFACNLIYATVSTYLLFFYT), 50 to 72 (AGTMFLVVRIIDALADPFIGTIV), 84 to 104 (PYLLFGAFPFVILAILCFTTP), 112 to 132 (LIYAYITYVGLSLTYTTINVP), 156 to 176 (LFANLGGLVVAFFVPLLAAYL), 186 to 206 (GWQLTMGILGMIGGCLLIFCF), 237 to 257 (LVVLSIFFIIIFGVNSISNSV), 271 to 291 (LVKWYGLIGSLPALVILPFIP), 311 to 331 (IIGLLALLFVPPSNVYLILVC), 334 to 354 (IAAAGSLTAGGYMWALIPETI), 367 to 387 (GLIYAIIGFFFKFGMALGGVV), and 408 to 428 (LMGILITTTIIPVFLLVLALI).

The protein belongs to the sodium:galactoside symporter (TC 2.A.2) family.

The protein localises to the cell membrane. This is an uncharacterized protein from Bacillus subtilis (strain 168).